The sequence spans 487 residues: Lysophospholipid acyltransferase 5 (487 aa).

The residue at position 2 (alanine 2) is an N-acetylalanine. The next 6 membrane-spanning stretches (helical) occupy residues 44-64 (LIFS…YLFY), 67-87 (SYLI…FNFG), 111-131 (ITAV…GYYY), 178-198 (ILGV…GAFL), 236-256 (LGLV…EDYL), and 285-305 (VTCW…FNGF). An N-linked (GlcNAc...) asparagine glycan is attached at asparagine 308. Residues asparagine 338 and histidine 374 contribute to the active site. Helical transmembrane passes span 364–384 (GLSL…LICF), 422–442 (LVQQ…FCLF), and 453–473 (SIYF…PYVY). The short motif at 484-487 (KKRE) is the Di-lysine motif element.

This sequence belongs to the membrane-bound acyltransferase family.

It localises to the endoplasmic reticulum membrane. The enzyme catalyses a 1-acyl-sn-glycero-3-phosphocholine + an acyl-CoA = a 1,2-diacyl-sn-glycero-3-phosphocholine + CoA. It catalyses the reaction a 1-acyl-sn-glycero-3-phosphoethanolamine + an acyl-CoA = a 1,2-diacyl-sn-glycero-3-phosphoethanolamine + CoA. It carries out the reaction a 1-acyl-sn-glycero-3-phospho-L-serine + an acyl-CoA = a 1,2-diacyl-sn-glycero-3-phospho-L-serine + CoA. The catalysed reaction is (9Z,12Z)-octadecadienoyl-CoA + a 1-acyl-sn-glycero-3-phosphocholine = 1-acyl-2-(9Z,12Z)-octadecadienoyl-sn-glycero-3-phosphocholine + CoA. The enzyme catalyses (5Z,8Z,11Z,14Z)-eicosatetraenoyl-CoA + a 1-acyl-sn-glycero-3-phosphocholine = 1-acyl-2-(5Z,8Z,11Z,14Z-eicosatetraenoyl)-sn-glycero-3-phosphocholine + CoA. It catalyses the reaction dodecanoyl-CoA + 1-hexadecanoyl-sn-glycero-3-phosphocholine = 1-hexadecanoyl-2-dodecanoyl-sn-glycero-3-phosphocholine + CoA. It carries out the reaction octadecanoyl-CoA + 1-hexadecanoyl-sn-glycero-3-phosphocholine = 1-hexadecanoyl-2-octadecanoyl-sn-glycero-3-phosphocholine + CoA. The catalysed reaction is 1-dodecanoyl-sn-glycero-3-phosphocholine + hexadecanoyl-CoA = 1-dodecanoyl-2-hexadecanoyl-sn-glycero-3-phosphocholine + CoA. The enzyme catalyses 1-tetradecanoyl-sn-glycero-3-phosphocholine + hexadecanoyl-CoA = 1-tetradecanoyl-2-hexadecanoyl-sn-glycero-3-phosphocholine + CoA. It catalyses the reaction 1-hexadecanoyl-sn-glycero-3-phosphocholine + hexadecanoyl-CoA = 1,2-dihexadecanoyl-sn-glycero-3-phosphocholine + CoA. It carries out the reaction 1-octadecanoyl-sn-glycero-3-phosphocholine + hexadecanoyl-CoA = 1-octadecanoyl-2-hexadecanoyl-sn-glycero-3-phosphocholine + CoA. The catalysed reaction is 1-(9Z-octadecenoyl)-sn-glycero-3-phosphocholine + hexadecanoyl-CoA = 1-(9Z-octadecenoyl)-2-hexadecanoyl-sn-glycero-3-phosphocholine + CoA. The enzyme catalyses (9Z)-hexadecenoyl-CoA + 1-hexadecanoyl-sn-glycero-3-phosphocholine = 1-hexadecanoyl-2-(9Z-hexadecenoyl)-sn-glycero-3-phosphocholine + CoA. It catalyses the reaction 1-hexadecanoyl-sn-glycero-3-phosphocholine + (9Z)-octadecenoyl-CoA = 1-hexadecanoyl-2-(9Z-octadecenoyl)-sn-glycero-3-phosphocholine + CoA. It carries out the reaction (9Z,12Z)-octadecadienoyl-CoA + 1-hexadecanoyl-sn-glycero-3-phosphocholine = 1-hexadecanoyl-2-(9Z,12Z-octadecadienoyl)-sn-glycero-3-phosphocholine + CoA. The catalysed reaction is 1-dodecanoyl-sn-glycero-3-phosphocholine + (5Z,8Z,11Z,14Z)-eicosatetraenoyl-CoA = 1-dodecanoyl-2-(5Z,8Z,11Z,14Z)-eicosatetraenoyl-sn-glycero-3-phosphocholine + CoA. The enzyme catalyses (5Z,8Z,11Z,14Z)-eicosatetraenoyl-CoA + 1-hexadecanoyl-sn-glycero-3-phosphocholine = 1-hexadecanoyl-2-(5Z,8Z,11Z,14Z-eicosatetraenoyl)-sn-glycero-3-phosphocholine + CoA. It catalyses the reaction 1-octadecanoyl-sn-glycero-3-phosphocholine + (5Z,8Z,11Z,14Z)-eicosatetraenoyl-CoA = 1-octadecanoyl-2-(5Z,8Z,11Z,14Z-eicosatetraenoyl)-sn-glycero-3-phosphocholine + CoA. It carries out the reaction 1-eicosanoyl-sn-glycero-3-phosphocholine + (5Z,8Z,11Z,14Z)-eicosatetraenoyl-CoA = 1-eicosanoyl-2-(5Z,8Z,11Z,14Z)-eicosatetraenoyl-sn-glycero-3-phosphocholine + CoA. The catalysed reaction is 1-(9Z-octadecenoyl)-sn-glycero-3-phosphocholine + (9Z)-octadecenoyl-CoA = 1,2-di-(9Z-octadecenoyl)-sn-glycero-3-phosphocholine + CoA. The enzyme catalyses 1-(9Z-octadecenoyl)-sn-glycero-3-phosphocholine + (9Z,12Z)-octadecadienoyl-CoA = 1-(9Z)-octadecenoyl-2-(9Z,12Z)-octadecadienoyl-sn-glycero-3-phosphocholine + CoA. It catalyses the reaction 1-(9Z-octadecenoyl)-sn-glycero-3-phosphocholine + (5Z,8Z,11Z,14Z)-eicosatetraenoyl-CoA = 1-(9Z)-octadecenoyl-2-(5Z,8Z,11Z,14Z)-icosatetraenoyl-sn-glycero-3-phosphocholine + CoA. It carries out the reaction a 1-acyl-sn-glycero-3-phosphoethanolamine + (9Z,12Z)-octadecadienoyl-CoA = 1-acyl-2-(9Z,12Z)-octadecadienoyl-sn-glycero-3-phosphoethanolamine + CoA. The catalysed reaction is 1-(9Z-octadecenoyl)-sn-glycero-3-phosphoethanolamine + (9Z,12Z)-octadecadienoyl-CoA = 1-(9Z)-octadecenoyl-2-(9Z,12Z)-octadecadienoyl-sn-glycero-3-phosphoethanolamine + CoA. The enzyme catalyses 1-(10Z-heptadecenoyl)-sn-glycero-3-phosphoethanolamine + (9Z,12Z)-octadecadienoyl-CoA = 1-(10Z-heptadecenoyl)-2-(9Z,12Z-octadecadienoyl)-sn-glycero-3-phosphoethanolamine + CoA. It catalyses the reaction a 1-acyl-sn-glycero-3-phosphoethanolamine + (5Z,8Z,11Z,14Z)-eicosatetraenoyl-CoA = 1-acyl-2-(5Z,8Z,11Z,14Z)-eicosatetraenoyl-sn-glycero-3-phosphoethanolamine + CoA. It carries out the reaction 1-hexadecanoyl-sn-glycero-3-phosphoethanolamine + (5Z,8Z,11Z,14Z)-eicosatetraenoyl-CoA = 1-hexadecanoyl-2-(5Z,8Z,11Z,14Z-eicosatetraenoyl)-sn-glycero-3-phosphoethanolamine + CoA. The catalysed reaction is 1-(9Z-octadecenoyl)-sn-glycero-3-phosphoethanolamine + (5Z,8Z,11Z,14Z)-eicosatetraenoyl-CoA = 1-(9Z)-octadecenoyl-2-(5Z,8Z,11Z,14Z)-eicosatetraenoyl-sn-glycero-3-phosphoethanolamine + CoA. The enzyme catalyses 1-(10Z-heptadecenoyl)-sn-glycero-3-phosphoethanolamine + (5Z,8Z,11Z,14Z)-eicosatetraenoyl-CoA = 1-(10Z-heptadecenoyl)-2-(5Z,8Z,11Z,14Z-eicosatetraenoyl)-sn-glycero-3-phosphoethanolamine + CoA. It catalyses the reaction a 1-O-(1Z-alkenyl)-sn-glycero-3-phosphoethanolamine + (5Z,8Z,11Z,14Z)-eicosatetraenoyl-CoA = 1-O-(1Z)-alkenyl-2-(5Z,8Z,11Z,14Z)-eicosatetraenoyl-sn-glycero-3-phosphoethanolamine + CoA. It carries out the reaction a 1-acyl-sn-glycero-3-phospho-L-serine + (9Z,12Z)-octadecadienoyl-CoA = 1-acyl-2-(9Z,12Z-octadecadienoyl)-sn-glycero-3-phospho-L-serine + CoA. The catalysed reaction is a 1-acyl-sn-glycero-3-phospho-L-serine + (5Z,8Z,11Z,14Z)-eicosatetraenoyl-CoA = 1-acyl-2-(5Z,8Z,11Z,14Z-eicosatetraenoyl)-sn-glycero-3-phospho-L-serine + CoA. The enzyme catalyses 1-hexadecanoyl-sn-glycero-3-phospho-L-serine + (9Z)-octadecenoyl-CoA = 1-hexadecanoyl-2-(9Z-octadecenoyl)-sn-glycero-3-phospho-L-serine + CoA. It catalyses the reaction 1-(9Z-octadecenoyl)-sn-glycero-3-phospho-L-serine + (9Z)-octadecenoyl-CoA = 1,2-di-(9Z)-octadecenoyl-sn-glycero-3-phospho-L-serine + CoA. It carries out the reaction 1-hexadecanoyl-sn-glycero-3-phospho-L-serine + (9Z,12Z)-octadecadienoyl-CoA = 1-hexadecanoyl-2-(9Z,12Z-octadecadienoyl)-sn-glycero-3-phospho-L-serine + CoA. The catalysed reaction is 1-(9Z-octadecenoyl)-sn-glycero-3-phospho-L-serine + (9Z,12Z)-octadecadienoyl-CoA = 1-(9Z-octadecenoyl)-2-(9Z,12Z-octadienoyl)-sn-glycero-3-phospho-L-serine + CoA. The enzyme catalyses 1-hexadecanoyl-sn-glycero-3-phospho-L-serine + (5Z,8Z,11Z,14Z)-eicosatetraenoyl-CoA = 1-hexadecanoyl-2-(5Z,8Z,11Z,14Z-eicosatetraenoyl)-sn-glycero-3-phospho-L-serine + CoA. It catalyses the reaction 1-(9Z-octadecenoyl)-sn-glycero-3-phospho-L-serine + (5Z,8Z,11Z,14Z)-eicosatetraenoyl-CoA = 1-(9Z-octadecenoyl)-2-(5Z,8Z,11Z,14Z-eicosatetraenoyl)-sn-glycero-3-phospho-L-serine + CoA. Its pathway is lipid metabolism; phospholipid metabolism. In terms of biological role, lysophospholipid O-acyltransferase (LPLAT) that catalyzes the reacylation step of the phospholipid remodeling process also known as the Lands cycle. Catalyzes transfer of the fatty acyl chain from fatty acyl-CoA to 1-acyl lysophospholipid to form various classes of phospholipids. Converts 1-acyl lysophosphatidylcholine (LPC) into phosphatidylcholine (PC) (LPCAT activity), 1-acyl lysophosphatidylserine (LPS) into phosphatidylserine (PS) (LPSAT activity) and 1-acyl lysophosphatidylethanolamine (LPE) into phosphatidylethanolamine (PE) (LPEAT activity). Favors polyunsaturated fatty acyl-CoAs as acyl donors compared to saturated fatty acyl-CoAs. Has higher activity for LPC acyl acceptors compared to LPEs and LPSs. Can also transfer the fatty acyl chain from fatty acyl-CoA to 1-O-alkyl lysophospholipid or 1-O-alkenyl lysophospholipid with lower efficiency. Acts as a major LPC O-acyltransferase in liver and intestine. As a component of the liver X receptor/NR1H3 or NR1H2 signaling pathway, mainly catalyzes the incorporation of arachidonate into PCs of endoplasmic reticulum (ER) membranes, increasing membrane dynamics and enabling triacylglycerols transfer to nascent very low-density lipoprotein (VLDL) particles. Promotes processing of sterol regulatory protein SREBF1 in hepatocytes, likely by facilitating the translocation of SREBF1-SCAP complex from ER to the Golgi apparatus. Participates in mechanisms by which the liver X receptor/NR1H3 or NR1H2 signaling pathway counteracts lipid-induced ER stress response and inflammation. Down-regulates hepatic inflammation by limiting arachidonic acid availability for synthesis of inflammatory eicosanoids, such as prostaglandins. In enterocytes, acts as a component of a gut-brain feedback loop that coordinates dietary lipid absorption and food intake. Regulates the abundance of PCs containing linoleate and arachidonate in enterocyte membranes, enabling passive diffusion of fatty acids and cholesterol across the membrane for efficient chylomicron assembly. In the intestinal crypt, acts as a component of dietary-responsive phospholipid-cholesterol axis, regulating the biosynthesis of cholesterol and its mitogenic effects on intestinal stem cells. This chain is Lysophospholipid acyltransferase 5 (Lpcat3), found in Rattus norvegicus (Rat).